Consider the following 147-residue polypeptide: Sentan (147 aa).

The interval 1–36 is disordered; the sequence is MGGCMHSTWDHALHSRGEPRPSEAPASISAPSKMPK. The segment covering 8-21 has biased composition (basic and acidic residues); it reads TWDHALHSRGEPRP. Residues 23-32 are compositionally biased toward low complexity; sequence EAPASISAPS.

It belongs to the S-100 family. As to expression, expressed exclusively in ciliated epithelial cells. Detected in ciliated epithelium of trachea and oviduct (at protein level).

The protein localises to the cell projection. Its subcellular location is the cilium. In terms of biological role, may be a component of the linker structure that bridges the ciliary membrane and peripheral singlet microtubules. The polypeptide is Sentan (Sntn) (Mus musculus (Mouse)).